The primary structure comprises 188 residues: Xanthine phosphoribosyltransferase (188 aa).

Residues leucine 20 and asparagine 27 each contribute to the xanthine site. 5-phospho-alpha-D-ribose 1-diphosphate is bound at residue 127-131 (AYGNA). Lysine 155 serves as a coordination point for xanthine.

This sequence belongs to the purine/pyrimidine phosphoribosyltransferase family. Xpt subfamily. In terms of assembly, homodimer.

The protein resides in the cytoplasm. The catalysed reaction is XMP + diphosphate = xanthine + 5-phospho-alpha-D-ribose 1-diphosphate. It functions in the pathway purine metabolism; XMP biosynthesis via salvage pathway; XMP from xanthine: step 1/1. Functionally, converts the preformed base xanthine, a product of nucleic acid breakdown, to xanthosine 5'-monophosphate (XMP), so it can be reused for RNA or DNA synthesis. The sequence is that of Xanthine phosphoribosyltransferase from Parabacteroides distasonis (strain ATCC 8503 / DSM 20701 / CIP 104284 / JCM 5825 / NCTC 11152).